Consider the following 390-residue polypeptide: Protein snail (390 aa).

The segment at 1-20 (MAANYKSCPLKKRPIVFVEE) is SNAG domain. Disordered stretches follow at residues 29-65 (ALTK…PKRD) and 162-191 (QSVY…DLSV). Polar residues-rich tracts occupy residues 32–43 (KDSQFAQDQPQD) and 162–172 (QSVYSYQQMTP). 5 C2H2-type zinc fingers span residues 245-267 (FKCD…RQFH), 280-302 (HSCE…IRTH), 306-328 (CKCP…IRTH), 334-356 (FQCP…QQTH), and 362-385 (YACQ…SSNC).

It belongs to the snail C2H2-type zinc-finger protein family.

The protein localises to the nucleus. In terms of biological role, essential for the correct specification of ventral-dorsal patterns. The sequence is that of Protein snail (sna) from Drosophila melanogaster (Fruit fly).